We begin with the raw amino-acid sequence, 328 residues long: Cytosolic Fe-S cluster assembly factor NBP35 (328 aa).

Positions 27, 41, 44, and 50 each coordinate [4Fe-4S] cluster. ATP is bound at residue 80 to 87 (GKGGVGKS). [4Fe-4S] cluster is bound by residues Cys253 and Cys256.

Belongs to the Mrp/NBP35 ATP-binding proteins family. NUBP1/NBP35 subfamily. As to quaternary structure, heterotetramer of 2 NBP35 and 2 CFD1 chains. Requires [4Fe-4S] cluster as cofactor.

The protein resides in the cytoplasm. The protein localises to the nucleus. Its function is as follows. Component of the cytosolic iron-sulfur (Fe/S) protein assembly (CIA) machinery. Required for maturation of extramitochondrial Fe-S proteins. The NBP35-CFD1 heterotetramer forms a Fe-S scaffold complex, mediating the de novo assembly of an Fe-S cluster and its transfer to target apoproteins. Required for biogenesis and export of both ribosomal subunits, which may reflect a role in assembly of the Fe/S clusters in RLI1, a protein which performs rRNA processing and ribosome export. This is Cytosolic Fe-S cluster assembly factor NBP35 from Saccharomyces cerevisiae (strain ATCC 204508 / S288c) (Baker's yeast).